The following is a 364-amino-acid chain: Dihydroorotate dehydrogenase (quinone) (364 aa).

FMN is bound by residues Ala61–Lys65 and Thr85. Lys65 lines the substrate pocket. Asn110–Phe114 is a substrate binding site. Residues Asn139 and Asn170 each contribute to the FMN site. Position 170 (Asn170) interacts with substrate. Residue Ser173 is the Nucleophile of the active site. Asn175 is a binding site for substrate. Positions 215 and 243 each coordinate FMN. Asn244–Thr245 serves as a coordination point for substrate. FMN is bound by residues Gly266, Gly295, and Tyr316–Thr317.

The protein belongs to the dihydroorotate dehydrogenase family. Type 2 subfamily. In terms of assembly, monomer. Requires FMN as cofactor.

The protein localises to the cell membrane. The catalysed reaction is (S)-dihydroorotate + a quinone = orotate + a quinol. The protein operates within pyrimidine metabolism; UMP biosynthesis via de novo pathway; orotate from (S)-dihydroorotate (quinone route): step 1/1. Catalyzes the conversion of dihydroorotate to orotate with quinone as electron acceptor. The protein is Dihydroorotate dehydrogenase (quinone) of Brucella anthropi (strain ATCC 49188 / DSM 6882 / CCUG 24695 / JCM 21032 / LMG 3331 / NBRC 15819 / NCTC 12168 / Alc 37) (Ochrobactrum anthropi).